The chain runs to 349 residues: Phosphate acetyltransferase (349 aa).

This sequence belongs to the phosphate acetyltransferase and butyryltransferase family.

It is found in the cytoplasm. It catalyses the reaction acetyl-CoA + phosphate = acetyl phosphate + CoA. It participates in metabolic intermediate biosynthesis; acetyl-CoA biosynthesis; acetyl-CoA from acetate: step 2/2. This Rickettsia typhi (strain ATCC VR-144 / Wilmington) protein is Phosphate acetyltransferase (pta).